We begin with the raw amino-acid sequence, 181 residues long: NAD(P)H-quinone oxidoreductase subunit I, chloroplastic (181 aa).

4Fe-4S ferredoxin-type domains are found at residues Gly-55–Glu-84 and Lys-95–Glu-124. 8 residues coordinate [4Fe-4S] cluster: Cys-64, Cys-67, Cys-70, Cys-74, Cys-104, Cys-107, Cys-110, and Cys-114.

It belongs to the complex I 23 kDa subunit family. As to quaternary structure, NDH is composed of at least 16 different subunits, 5 of which are encoded in the nucleus. [4Fe-4S] cluster serves as cofactor.

It localises to the plastid. The protein localises to the chloroplast thylakoid membrane. The catalysed reaction is a plastoquinone + NADH + (n+1) H(+)(in) = a plastoquinol + NAD(+) + n H(+)(out). The enzyme catalyses a plastoquinone + NADPH + (n+1) H(+)(in) = a plastoquinol + NADP(+) + n H(+)(out). In terms of biological role, NDH shuttles electrons from NAD(P)H:plastoquinone, via FMN and iron-sulfur (Fe-S) centers, to quinones in the photosynthetic chain and possibly in a chloroplast respiratory chain. The immediate electron acceptor for the enzyme in this species is believed to be plastoquinone. Couples the redox reaction to proton translocation, and thus conserves the redox energy in a proton gradient. In Physcomitrium patens (Spreading-leaved earth moss), this protein is NAD(P)H-quinone oxidoreductase subunit I, chloroplastic.